The sequence spans 186 residues: Ran guanine nucleotide release factor (186 aa).

The segment at 27–70 (DLRPVPDHQEVFCHRVTDQSLIVELLELQAHVQGEEAARYHFED) is interaction with RAN.

It belongs to the MOG1 family. As to quaternary structure, monomer. Interacts with RAN, both RAN-GTP and RAN-GDP. Competes with RCC1 for a common binding site on RAN and thereby inhibits RCC1-mediated nucleotide exchange. Forms a complex with RAN-GTP and RANBP1. Interacts with the cytoplasmic loop 2 of SCN5A.

It localises to the nucleus. It is found in the cytoplasm. Its subcellular location is the perinuclear region. The protein resides in the cell membrane. In terms of biological role, may regulate the intracellular trafficking of RAN. Promotes guanine nucleotide release from RAN and inhibits binding of new GTP by preventing the binding of the RAN guanine nucleotide exchange factor RCC1. Regulates the levels of GTP-bound RAN in the nucleus, and thereby plays a role in the regulation of RAN-dependent mitotic spindle dynamics. Enhances the expression of SCN5A at the cell membrane in cardiomyocytes. In Bos taurus (Bovine), this protein is Ran guanine nucleotide release factor (RANGRF).